We begin with the raw amino-acid sequence, 436 residues long: Trigger factor (436 aa).

Residues 161-246 (DDQLNIDFVG…VNSVAEPKLP (86 aa)) form the PPIase FKBP-type domain.

This sequence belongs to the FKBP-type PPIase family. Tig subfamily.

It is found in the cytoplasm. The enzyme catalyses [protein]-peptidylproline (omega=180) = [protein]-peptidylproline (omega=0). Functionally, involved in protein export. Acts as a chaperone by maintaining the newly synthesized protein in an open conformation. Functions as a peptidyl-prolyl cis-trans isomerase. This Pseudomonas aeruginosa (strain LESB58) protein is Trigger factor.